The sequence spans 447 residues: Tubulin beta-1 chain (447 aa).

Positions 11, 69, 138, 142, 143, 144, 204, and 226 each coordinate GTP. E69 contributes to the Mg(2+) binding site.

The protein belongs to the tubulin family. As to quaternary structure, dimer of alpha and beta chains. A typical microtubule is a hollow water-filled tube with an outer diameter of 25 nm and an inner diameter of 15 nM. Alpha-beta heterodimers associate head-to-tail to form protofilaments running lengthwise along the microtubule wall with the beta-tubulin subunit facing the microtubule plus end conferring a structural polarity. Microtubules usually have 13 protofilaments but different protofilament numbers can be found in some organisms and specialized cells. Mg(2+) is required as a cofactor.

Its subcellular location is the cytoplasm. It localises to the cytoskeleton. In terms of biological role, tubulin is the major constituent of microtubules, a cylinder consisting of laterally associated linear protofilaments composed of alpha- and beta-tubulin heterodimers. Microtubules grow by the addition of GTP-tubulin dimers to the microtubule end, where a stabilizing cap forms. Below the cap, tubulin dimers are in GDP-bound state, owing to GTPase activity of alpha-tubulin. This is Tubulin beta-1 chain (benA) from Emericella nidulans (strain FGSC A4 / ATCC 38163 / CBS 112.46 / NRRL 194 / M139) (Aspergillus nidulans).